The following is a 505-amino-acid chain: Acetylcholine receptor subunit beta (505 aa).

The first 24 residues, 1-24 (MTPGALLLLLLGVLGAHLAPGARG), serve as a signal peptide directing secretion. Over 25–245 (SEAEGRLREK…VTFYLIIRRK (221 aa)) the chain is Extracellular. A disulfide bridge connects residues C152 and C166. N-linked (GlcNAc...) asparagine glycosylation occurs at N165. A run of 3 helical transmembrane segments spans residues 246–270 (PLFY…VFYL), 278–295 (MGLS…LLLL), and 312–333 (YLMF…VLNL). Residues 334–473 (HHRSPHTHQM…WQFVAMVVDR (140 aa)) lie on the Cytoplasmic side of the membrane. The disordered stretch occupies residues 365–391 (KPERDQMQEPPSIAPRDSPGSGWGRGT). Residue Y394 is modified to Phosphotyrosine; by Tyr-kinases. The chain crosses the membrane as a helical span at residues 474-492 (LFLWTFIIFTSVGTLVIFL).

This sequence belongs to the ligand-gated ion channel (TC 1.A.9) family. Acetylcholine receptor (TC 1.A.9.1) subfamily. Beta-1/CHRNB1 sub-subfamily. Pentamer of two alpha chains, and one each of the beta, delta, and gamma (in immature muscle) or epsilon (in mature muscle) chains. The muscle heteropentamer composed of alpha-1, beta-1, delta, epsilon subunits interacts with the alpha-conotoxin ImII.

It is found in the postsynaptic cell membrane. The protein localises to the cell membrane. The catalysed reaction is K(+)(in) = K(+)(out). It carries out the reaction Na(+)(in) = Na(+)(out). After binding acetylcholine, the AChR responds by an extensive change in conformation that affects all subunits and leads to opening of an ion-conducting channel across the plasma membrane. The polypeptide is Acetylcholine receptor subunit beta (CHRNB1) (Bos taurus (Bovine)).